A 363-amino-acid chain; its full sequence is Src kinase-associated phosphoprotein 1 (363 aa).

A disordered region spans residues 62 to 94 (PFPSDYKEEDGSDDNRSSSLGRSAQSDDASLAS). Residues 84-94 (SAQSDDASLAS) are compositionally biased toward low complexity. The region spanning 118 to 221 (NVLKQGYLEK…WVDQIKIVLR (104 aa)) is the PH domain. Positions 227–273 (VIPVDDEEEEEEEEETYDDIEGEGGPPLPQPLSGTWGRGGDTGAADE) are disordered. The span at 230–248 (VDDEEEEEEEEETYDDIEG) shows a compositional bias: acidic residues. An SH3 domain is found at 301–362 (EYANYYQGLW…PKDFLHPAYI (62 aa)).

Belongs to the SKAP family. As to quaternary structure, homodimer. Phosphorylated on tyrosines.

Its subcellular location is the cytoplasm. It is found in the nucleus. The protein resides in the cell membrane. In terms of biological role, positively regulates T-cell receptor signaling. Required for optimal conjugation between T-cells and antigen-presenting cells. The polypeptide is Src kinase-associated phosphoprotein 1 (skap1) (Takifugu rubripes (Japanese pufferfish)).